The sequence spans 394 residues: Actin-related protein 2 (394 aa).

Residues 160–162 (GDG), 214–218 (RMIKE), and 305–310 (GGSTMY) contribute to the ATP site.

Belongs to the actin family. ARP2 subfamily. Component of the Arp2/3 complex composed of ACTR2/ARP2, ACTR3/ARP3, ARPC1B/p41-ARC, ARPC2/p34-ARC, ARPC3/p21-ARC, ARPC4/p20-ARC and ARPC5/p16-ARC.

Its subcellular location is the cytoplasm. The protein localises to the cytoskeleton. The protein resides in the cell projection. It is found in the nucleus. ATP-binding component of the Arp2/3 complex, a multiprotein complex that mediates actin polymerization upon stimulation by nucleation-promoting factor (NPF). The Arp2/3 complex mediates the formation of branched actin networks in the cytoplasm, providing the force for cell motility. Seems to contact the pointed end of the daughter actin filament. In addition to its role in the cytoplasmic cytoskeleton, the Arp2/3 complex also promotes actin polymerization in the nucleus, thereby regulating gene transcription and repair of damaged DNA. The Arp2/3 complex promotes homologous recombination (HR) repair in response to DNA damage by promoting nuclear actin polymerization, leading to drive motility of double-strand breaks (DSBs). The protein is Actin-related protein 2 (ACTR2) of Gallus gallus (Chicken).